We begin with the raw amino-acid sequence, 112 residues long: UPF0145 protein LAF_1635 (112 aa).

Belongs to the UPF0145 family.

The sequence is that of UPF0145 protein LAF_1635 from Limosilactobacillus fermentum (strain NBRC 3956 / LMG 18251) (Lactobacillus fermentum).